A 234-amino-acid chain; its full sequence is Coiled-coil domain-containing protein 194 (234 aa).

The N-terminal stretch at 1-42 is a signal peptide; that stretch reads MAEPGPEPGRAWRVLALCGVAVFLAAAAAGGALVAWNLAASA. Disordered regions lie at residues 44 to 67 and 187 to 234; these read RGPRCPEPGANATAPPGDPPPGVD and VLEA…RARG. The stretch at 66–163 forms a coiled coil; it reads VDDLRRRLAE…TRRLDEALRR (98 aa). Residues 187-196 show a composition bias toward low complexity; that stretch reads VLEAEMSPQR. Residues 197 to 217 show a composition bias toward basic residues; the sequence is RVPRPRPRSGSRPRPSPRSRS.

The protein is Coiled-coil domain-containing protein 194 of Homo sapiens (Human).